Here is a 387-residue protein sequence, read N- to C-terminus: Alkanesulfonate monooxygenase (387 aa).

Belongs to the SsuD family.

The catalysed reaction is an alkanesulfonate + FMNH2 + O2 = an aldehyde + FMN + sulfite + H2O + 2 H(+). Functionally, catalyzes the desulfonation of aliphatic sulfonates. This is Alkanesulfonate monooxygenase from Ralstonia pickettii (strain 12J).